A 1099-amino-acid chain; its full sequence is Transmembrane protein 132C (1099 aa).

A signal peptide spans 1–31 (MRSEGAAPRRAARYGALSLVLATLLGQVTES). Over 32–915 (RGVMDNIQRF…LMQTAHGLSD (884 aa)) the chain is Extracellular. A glycan (N-linked (GlcNAc...) asparagine) is linked at Asn-95. A disordered region spans residues 237–260 (GDCTGGDTRKDNAIRPGKDGQEGR). N-linked (GlcNAc...) asparagine glycosylation is found at Asn-314 and Asn-371. The tract at residues 801–872 (DADSSQTGEK…NNVGKSGRRD (72 aa)) is disordered. The span at 813–849 (EEIKNHASDRRQKIQDLERPGQDELYHGNFPGDREEG) shows a compositional bias: basic and acidic residues. Residues 916-936 (LEIGMYALLGVFCLAILVFLI) form a helical membrane-spanning segment. The Cytoplasmic portion of the chain corresponds to 937–1099 (NCATFAFKYR…TYLEKFQDSV (163 aa)). Residues 1002 to 1045 (NHLLLNGGSQKPTQSQVHRPPGSGGRQTREPRQEPANSPTSKMK) are disordered. Over residues 1008 to 1018 (GGSQKPTQSQV) the composition is skewed to polar residues.

This sequence belongs to the TMEM132 family.

It localises to the membrane. The protein is Transmembrane protein 132C (Tmem132c) of Mus musculus (Mouse).